The chain runs to 118 residues: Superoxide-generating NADPH oxidase light chain subunit (118 aa).

4 consecutive transmembrane segments (helical) span residues 9-29 (WAAM…IMGI), 36-56 (IAIY…PLSF), 62-82 (AIFH…VLCY), and 83-103 (FLVP…VFLI).

It belongs to the p22phox family. In terms of assembly, composed of a heavy chain and a light chain.

It localises to the cell membrane. Functionally, critical component of the membrane-bound oxidase of phagocytes that generates superoxide. This Dictyostelium discoideum (Social amoeba) protein is Superoxide-generating NADPH oxidase light chain subunit (cybA).